A 28-amino-acid chain; its full sequence is leu operon leader peptide (28 aa).

Its function is as follows. Involved in control of the biosynthesis of leucine. This chain is leu operon leader peptide (leuL), found in Shigella flexneri.